Consider the following 435-residue polypeptide: Glutamate-1-semialdehyde 2,1-aminomutase (435 aa).

Position 266 is an N6-(pyridoxal phosphate)lysine (K266).

The protein belongs to the class-III pyridoxal-phosphate-dependent aminotransferase family. HemL subfamily. In terms of assembly, homodimer. It depends on pyridoxal 5'-phosphate as a cofactor.

The protein localises to the cytoplasm. The enzyme catalyses (S)-4-amino-5-oxopentanoate = 5-aminolevulinate. It participates in porphyrin-containing compound metabolism; protoporphyrin-IX biosynthesis; 5-aminolevulinate from L-glutamyl-tRNA(Glu): step 2/2. The protein is Glutamate-1-semialdehyde 2,1-aminomutase of Helicobacter hepaticus (strain ATCC 51449 / 3B1).